The following is a 399-amino-acid chain: V-set and immunoglobulin domain-containing protein 4 (399 aa).

A signal peptide spans 1–19 (MGILLGLLLLGHLTVDTYG). Residues 20–283 (RPILEVPESV…TSAGPGKSLP (264 aa)) lie on the Extracellular side of the membrane. Ig-like domains lie at 21–131 (PILE…DKIT) and 143–226 (PTVT…SDIV). Disulfide bonds link Cys41–Cys113 and Cys165–Cys211. A helical transmembrane segment spans residues 284-304 (VFAIILIISLCCMVVFTMAYI). Residues 305–399 (MLCRKTSQQE…FLATEGKSVC (95 aa)) are Cytoplasmic-facing.

Abundantly expressed in several fetal tissues. In adult tissues, highest expression in lung and placenta. Expressed in resting macrophages.

The protein resides in the membrane. In terms of biological role, phagocytic receptor, strong negative regulator of T-cell proliferation and IL2 production. Potent inhibitor of the alternative complement pathway convertases. This chain is V-set and immunoglobulin domain-containing protein 4 (VSIG4), found in Homo sapiens (Human).